Consider the following 2203-residue polypeptide: Voltage-dependent L-type calcium channel subunit alpha-1D (2203 aa).

Disordered regions lie at residues 1–51 (MMMM…QTVL) and 64–100 (KAAQ…SSNS). Over 1–126 (MMMMMMMKKM…RACISIVDWK (126 aa)) the chain is Cytoplasmic. A compositionally biased stretch (polar residues) spans 38–51 (GPTSQPNSSKQTVL). The segment covering 82-93 (QRKRQQYAKSKK) has biased composition (basic residues). One copy of the I repeat lies at 112 to 408 (NNPIRRACIS…NLVLGVLSGE (297 aa)). The chain crosses the membrane as a helical span at residues 127–145 (PFDIFILLAIFANCVALAI). Residues 146-163 (YIPFPEDDSNSTNHNLEK) lie on the Extracellular side of the membrane. N-linked (GlcNAc...) asparagine glycosylation is present at Asn155. The chain crosses the membrane as a helical span at residues 164-183 (VEYAFLIIFTVETFLKIIAS). At 184 to 195 (GLLLHPNASVRN) the chain is on the cytoplasmic side. The chain crosses the membrane as a helical span at residues 196–214 (GWNLLDFVIVIVGLFSVIL). The Extracellular segment spans residues 215 to 235 (EQLTKETEGGNHSSGKSGGFD). Asn225 carries an N-linked (GlcNAc...) asparagine glycan. A helical membrane pass occupies residues 236–254 (VKALRAFRVLRPLRLVSGV). Over 255 to 273 (PSLQVVLNSIIKAMVPLLH) the chain is Cytoplasmic. A helical transmembrane segment spans residues 274–293 (IALLVLFVIIIYAIIGLELF). Residues 294 to 381 (IGKMHKTCFF…WVNDAIGWEW (88 aa)) lie on the Extracellular side of the membrane. Asn329 carries an N-linked (GlcNAc...) asparagine glycan. Glu364 is a binding site for Ca(2+). A helical transmembrane segment spans residues 382 to 406 (PWVYFVSLIILGSFFVLNLVLGVLS). Topologically, residues 407–582 (GEFSKEREKA…RRCRAAVKSV (176 aa)) are cytoplasmic. The segment at 429–446 (QQLEEDLKGYLDWITQAE) is binding to the beta subunit. Residues 449–480 (DPENEEEGGEEGKRNTSMPTSETESVNTENVS) form a disordered region. Polar residues predominate over residues 463–479 (NTSMPTSETESVNTENV). An II repeat occupies 528–774 (EALCVCRCSL…DWNAVMYDGI (247 aa)). The helical transmembrane segment at 583–602 (TFYWLVIVLVFLNTLTISSE) threads the bilayer. Residues 603–617 (HYNQPDWLTQIQDIA) lie on the Extracellular side of the membrane. Residues 618–636 (NKVLLALFTCEMLVKMYSL) traverse the membrane as a helical segment. Residues 637–644 (GLQAYFVS) are Cytoplasmic-facing. Residues 645 to 663 (LFNRFDCFVVCGGITETIL) form a helical membrane-spanning segment. Over 664–673 (VELELMSPLG) the chain is Extracellular. Residues 674 to 692 (VSVFRCVRLLRIFKVTRHW) form a helical membrane-spanning segment. The Cytoplasmic portion of the chain corresponds to 693-711 (TSLSNLVASLLNSMKSIAS). Residues 712–732 (LLLLLFLFIIIFSLLGMQLFG) traverse the membrane as a helical segment. The Extracellular portion of the chain corresponds to 733-786 (GKFNFDETQTKRSTFDNFPQALLTVFQILTGEDWNAVMYDGIMAYGGPSSSGMI). Glu764 is a Ca(2+) binding site. A helical membrane pass occupies residues 787 to 811 (VCIYFIILFICGNYILLKLFLAIAV). Residues 812–945 (DNLADAESLN…VGCHKLINHH (134 aa)) are Cytoplasmic-facing. The segment at 822–909 (TAQKEEAEEK…AGPRPRRISE (88 aa)) is disordered. Basic and acidic residues predominate over residues 824-849 (QKEEAEEKERKKIARKESLENKKNNK). A compositionally biased stretch (polar residues) spans 850-861 (PEVNQIANSDNK). Residues 884 to 897 (VGEEEEEEEEDEPE) show a composition bias toward acidic residues. Residues 892 to 1174 (EEDEPEVPAG…LLYKAIDSNG (283 aa)) form an III repeat. The helical transmembrane segment at 946–964 (IFTNLILVFIMLSSAALAA) threads the bilayer. Residues 965 to 980 (EDPIRSHSFRNTILGY) lie on the Extracellular side of the membrane. A helical transmembrane segment spans residues 981-1000 (FDYAFTAIFTVEILLKMTTF). Over 1001-1012 (GAFLHKGAFCRN) the chain is Cytoplasmic. A helical transmembrane segment spans residues 1013-1031 (YFNLLDMLVVGVSLVSFGI). Topologically, residues 1032-1037 (QSSAIS) are extracellular. A helical transmembrane segment spans residues 1038 to 1057 (VVKILRVLRVLRPLRAINRA). The Cytoplasmic segment spans residues 1058–1076 (KGLKHVVQCVFVAIRTIGN). Residues 1077–1096 (IMIVTTLLQFMFACIGVQLF) traverse the membrane as a helical segment. Topologically, residues 1097 to 1186 (KGKFYRCTDE…VGPVYNYRVE (90 aa)) are extracellular. The interval 1134-1224 (RIWQNSDFNF…QEQGEKEYKN (91 aa)) is dihydropyridine binding. Glu1160 contributes to the Ca(2+) binding site. The helical transmembrane segment at 1187 to 1207 (ISIFFIIYIIIVAFFMMNIFV) threads the bilayer. The Cytoplasmic segment spans residues 1208-1264 (GFVIVTFQEQGEKEYKNCELDKNQRQCVEYALKARPLRRYIPKNPYQYKFWYVVNSS). One copy of the IV repeat lies at 1211–1486 (IVTFQEQGEK…YTCGSNFAIV (276 aa)). The helical transmembrane segment at 1265–1283 (PFEYMMFVLIMLNTLCLAM) threads the bilayer. The Extracellular segment spans residues 1284-1298 (QHYEQSKMFNDAMDI). A helical transmembrane segment spans residues 1299–1318 (LNMVFTGVFTVEMVLKVIAF). At 1319-1325 (KPKGYFS) the chain is on the cytoplasmic side. A helical membrane pass occupies residues 1326 to 1347 (DAWNTFDSLIVIGSIIDVALSE). The Extracellular segment spans residues 1348 to 1357 (ADNSEESNRI). A helical membrane pass occupies residues 1358–1377 (SITFFRLFRVMRLVKLLSRG). The Cytoplasmic portion of the chain corresponds to 1378–1396 (EGIRTLLWTFIKSFQALPY). The helical transmembrane segment at 1397–1416 (VALLIAMLFFIYAVIGMQMF) threads the bilayer. Residues 1417–1483 (GKVAMRDNNQ…GEEYTCGSNF (67 aa)) lie on the Extracellular side of the membrane. The tract at residues 1464–1530 (LCDPDSDYNP…LGPHHLDEFK (67 aa)) is dihydropyridine binding. The segment at 1476–1519 (EYTCGSNFAIVYFISFYMLCAFLIINLFVAVIMDNFDYLTRDWS) is phenylalkylamine binding. The helical transmembrane segment at 1484–1508 (AIVYFISFYMLCAFLIINLFVAVIM) threads the bilayer. Over 1509 to 2203 (DNFDYLTRDW…ADEMICITTL (695 aa)) the chain is Cytoplasmic. 4 disordered regions span residues 1734-1766 (NHVN…PASD), 1795-1816 (TSTN…KRPS), 1920-1963 (FERP…HRRS), and 2176-2195 (GPGY…DLAD). The span at 1795–1806 (TSTNANLNNANM) shows a compositional bias: polar residues. A compositionally biased stretch (acidic residues) spans 2180 to 2195 (SDEEPDPGREEEDLAD).

It belongs to the calcium channel alpha-1 subunit (TC 1.A.1.11) family. CACNA1D subfamily. Voltage-dependent calcium channels are multisubunit complexes, consisting of alpha-1, alpha-2, beta and delta subunits in a 1:1:1:1 ratio. The channel activity is directed by the pore-forming and voltage-sensitive alpha-1 subunit. In many cases, this subunit is sufficient to generate voltage-sensitive calcium channel activity. The auxiliary subunits beta and alpha-2/delta linked by a disulfide bridge regulate the channel activity. Interacts with CABP1 and CABP4, resulting in a near elimination of calcium-dependent inactivation of the channel. Interacts with RIMBP2. Expressed in brain, pancreatic islets and B-lymphocytes.

It localises to the membrane. It catalyses the reaction Ca(2+)(in) = Ca(2+)(out). Voltage-sensitive calcium channels (VSCC) mediate the entry of calcium ions into excitable cells and are also involved in a variety of calcium-dependent processes, including muscle contraction, hormone or neurotransmitter release, gene expression, cell motility, cell division and cell death. The isoform alpha-1D gives rise to L-type calcium currents. Long-lasting (L-type) calcium channels belong to the 'high-voltage activated' (HVA) group. They are blocked by dihydropyridines (DHP), phenylalkylamines, and by benzothiazepines. Functionally, voltage-sensitive calcium channels (VSCC) mediate the entry of calcium ions into excitable cells and are also involved in a variety of calcium-dependent processes, including muscle contraction, hormone or neurotransmitter release, gene expression, cell motility, cell division and cell death. The isoform alpha-1D gives rise to L-type calcium currents. This is Voltage-dependent L-type calcium channel subunit alpha-1D (Cacna1d) from Rattus norvegicus (Rat).